The primary structure comprises 408 residues: Branched-chain amino acid aminotransferase 2, chloroplastic (408 aa).

The N-terminal 58 residues, 1 to 58 (MDCAAALLPGFHPNYLLCPSRHFSSLLPKTDLSSPLKFQLQNKQLSLASSHGFSPVIC), are a transit peptide targeting the chloroplast. Arg152 is a pyridoxal 5'-phosphate binding site. Lys254 acts as the Proton acceptor in catalysis. The residue at position 254 (Lys254) is an N6-(pyridoxal phosphate)lysine. Glu290 is a pyridoxal 5'-phosphate binding site.

Belongs to the class-IV pyridoxal-phosphate-dependent aminotransferase family. Pyridoxal 5'-phosphate serves as cofactor. In terms of tissue distribution, expressed in lupulin glands and leaves.

The protein resides in the plastid. Its subcellular location is the chloroplast. The catalysed reaction is L-isoleucine + 2-oxoglutarate = (S)-3-methyl-2-oxopentanoate + L-glutamate. The enzyme catalyses L-leucine + 2-oxoglutarate = 4-methyl-2-oxopentanoate + L-glutamate. It carries out the reaction L-valine + 2-oxoglutarate = 3-methyl-2-oxobutanoate + L-glutamate. Its pathway is amino-acid biosynthesis; L-isoleucine biosynthesis; L-isoleucine from 2-oxobutanoate: step 4/4. The protein operates within amino-acid biosynthesis; L-leucine biosynthesis; L-leucine from 3-methyl-2-oxobutanoate: step 4/4. It participates in amino-acid biosynthesis; L-valine biosynthesis; L-valine from pyruvate: step 4/4. Functionally, converts 2-oxo acids to branched-chain amino acids. Shows no kinetic preferences corresponding to anabolic or catabolic functions, but likely involved in BCAA biosynthesis. This chain is Branched-chain amino acid aminotransferase 2, chloroplastic, found in Humulus lupulus (European hop).